Reading from the N-terminus, the 316-residue chain is 4-diphosphocytidyl-2-C-methyl-D-erythritol kinase (316 aa).

Lys32 is a catalytic residue. 126–136 provides a ligand contact to ATP; the sequence is PVGAGLGGGSA. Asp168 is an active-site residue.

It belongs to the GHMP kinase family. IspE subfamily.

The catalysed reaction is 4-CDP-2-C-methyl-D-erythritol + ATP = 4-CDP-2-C-methyl-D-erythritol 2-phosphate + ADP + H(+). Its pathway is isoprenoid biosynthesis; isopentenyl diphosphate biosynthesis via DXP pathway; isopentenyl diphosphate from 1-deoxy-D-xylulose 5-phosphate: step 3/6. Its function is as follows. Catalyzes the phosphorylation of the position 2 hydroxy group of 4-diphosphocytidyl-2C-methyl-D-erythritol. This is 4-diphosphocytidyl-2-C-methyl-D-erythritol kinase from Bifidobacterium longum (strain NCC 2705).